Reading from the N-terminus, the 364-residue chain is MGSTAGDVAAVVDEEACMYAMQLASSSILPMTLKNAIELGLLEVLQKEAGGGKAALAPEEVVARMPAAPGDPAAAAAMVDRMLRLLASYDVVRCQMEDRDGRYERRYSAAPVCKWLTPNEDGVSMAALALMNQDKVLMESWYYLKDAVLDGGIPFNKAYGMTAFEYHGTDSRFNRVFNEGMKNHSVIITKKLLDFYTGFEGVSTLVDVGGGVGATLHAITSRHPHISGVNFDLPHVISEAPPFPGVRHVGGDMFASVPAGDAILMKWILHDWSDAHCATLLKNCYDALPENGKVIVVECVLPVNTEATPKAQGVFHVDMIMLAHNPGGKERYEREFRELAKGAGFSGFKATYIYANAWAIEFIK.

131 to 137 (MNQDKVL) contributes to the substrate binding site. Positions 163–181 (AFEYHGTDSRFNRVFNEGM) are substrate binding. S-adenosyl-L-methionine-binding residues include Gly-209, Asp-232, Asp-252, Met-253, and Lys-266. His-270 functions as the Proton acceptor in the catalytic mechanism.

Belongs to the class I-like SAM-binding methyltransferase superfamily. Cation-independent O-methyltransferase family. COMT subfamily. Homodimer. In terms of tissue distribution, confined to the vascular tissues of organs undergoing lignification such as stems and roots.

The enzyme catalyses (E)-caffeate + S-adenosyl-L-methionine = (E)-ferulate + S-adenosyl-L-homocysteine + H(+). It carries out the reaction tricetin + 2 S-adenosyl-L-methionine = 3',5'-di-O-methyltricetin + 2 S-adenosyl-L-homocysteine + 2 H(+). It catalyses the reaction luteolin + S-adenosyl-L-methionine = chrysoeriol + S-adenosyl-L-homocysteine + H(+). The catalysed reaction is tricetin + S-adenosyl-L-methionine = 3'-O-methyltricetin + S-adenosyl-L-homocysteine + H(+). It participates in aromatic compound metabolism; phenylpropanoid biosynthesis. Catalyzes the conversion of caffeic acid to ferulic acid and of 5-hydroxyferulic acid to sinapic acid. The resulting products may subsequently be converted to the corresponding alcohols that are incorporated into lignins. Can use the flavone tricetin (5,7,3',4',5'-pentahydroxyflavone) as the preferred substrate and give rise to its 3',5'-dimethyl derivative, tricin (3',5'-dimethoxy-5,7,4'-trihydroxyflavone), as the major product, and selgin to a lower extent. Tricin exhibits potential benefits for human health including relaxant effect on smooth muscle of intestinal tissues, antioxidant effect, antihistaminic activity, and growth inhibition of human malignant breast tumor cells and colon cancer cells. Can also use luteolin, quercetin and 5-hydroxyferulic acid (5HF) as substrates. The sequence is that of Caffeic acid 3-O-methyltransferase from Zea mays (Maize).